Reading from the N-terminus, the 100-residue chain is MSTGPTAATGSNRRLQQTQNQVDEVVDIMRVNVDKVLERDQKLSELDDRADALQAGASQFETSAAKLKRKYWWKNCKMWAIGITVLVIFIIIIIVWVVSS.

At S2 the chain carries N-acetylserine. Over S2–K77 the chain is Cytoplasmic. The v-SNARE coiled-coil homology domain occupies R14–K74. Glycyl lysine isopeptide (Lys-Gly) (interchain with G-Cter in ubiquitin) cross-links involve residues K66, K68, and K77. The chain crosses the membrane as a helical; Anchor for type IV membrane protein span at residues M78 to V98. Topologically, residues S99 to S100 are vesicular.

This sequence belongs to the synaptobrevin family. As to quaternary structure, interacts with POPDC1 (via the C-terminus cytoplasmic tail). Interacts with BCAP31; involved in VAMP3 export from the endoplasmic reticulum. Interacts with BAIAP3; this interaction is increased in the presence of calcium. Interacts with PICALM. In terms of processing, ubiquitinated by RNF167 at Lys-66, Lys-68 and Lys-77, regulating the recycling endosome pathway. Post-translationally, (Microbial infection) Targeted and hydrolyzed by C.botulinum neurotoxin type B (BoNT/B, botB) which hydrolyzes the 59-Gln-|-Phe-60 bond and probably inhibits neurotransmitter release. (Microbial infection) Targeted and hydrolyzed by C.botulinum neurotoxin type D (BoNT/D, botD) which hydrolyzes the 42-Lys-|-Leu-43 bond and probably inhibits neurotransmitter release. Note that humans are not known to be infected by C.botulinum type D. In terms of processing, (Microbial infection) Targeted and hydrolyzed by C.botulinum neurotoxin type F (BoNT/F, botF) which hydrolyzes the 41-Gln-|-Lys-42 bond and probably inhibits neurotransmitter release.

Its subcellular location is the early endosome membrane. The protein localises to the recycling endosome membrane. It localises to the synapse. The protein resides in the synaptosome. In terms of biological role, SNARE involved in vesicular transport from the late endosomes to the trans-Golgi network. The chain is Vesicle-associated membrane protein 3 (VAMP3) from Homo sapiens (Human).